The primary structure comprises 310 residues: Putrescinyltransferase (310 aa).

It belongs to the thymidine aminotransferase family.

The catalysed reaction is 5-phosphomethyl-dUMP in DNA + putrescine = 5-N(alpha)-putrescinyl-dTMP in DNA + phosphate. Functionally, transfers putrescine to 5-phosphomethyl-2'-deoxyuridine (5-PmdU) to produce 5-Nalpha-putrescinylthymidine (Nalpha-PutT) as a step in the pathway leading to thymidine hypermodifications in the viral genome. As a final result of the pathway of hypermodification, Nalpha-PutT substitutes for about 50% of thymidines in the viral DNA. These modifications probably prevent degradation of viral genome by the host restriction-modification antiviral defense system. The sequence is that of Putrescinyltransferase from Delftia phage PhiW-14 (Deftia acidovorans bacteriophage phiW-14).